A 147-amino-acid chain; its full sequence is Nucleoside diphosphate kinase (147 aa).

Positions 9, 57, 85, 91, 102, and 112 each coordinate ATP. The active-site Pros-phosphohistidine intermediate is H115.

Belongs to the NDK family. Mg(2+) serves as cofactor.

The protein localises to the cytoplasm. It catalyses the reaction a 2'-deoxyribonucleoside 5'-diphosphate + ATP = a 2'-deoxyribonucleoside 5'-triphosphate + ADP. It carries out the reaction a ribonucleoside 5'-diphosphate + ATP = a ribonucleoside 5'-triphosphate + ADP. Major role in the synthesis of nucleoside triphosphates other than ATP. The ATP gamma phosphate is transferred to the NDP beta phosphate via a ping-pong mechanism, using a phosphorylated active-site intermediate. The sequence is that of Nucleoside diphosphate kinase from Ignicoccus hospitalis (strain KIN4/I / DSM 18386 / JCM 14125).